Here is a 473-residue protein sequence, read N- to C-terminus: GTPase Der (473 aa).

EngA-type G domains follow at residues 3 to 167 (FTVA…GKDR) and 203 to 378 (LRVA…RVWN). GTP is bound by residues 9-16 (GRPNVGKS), 56-60 (DTAGL), 119-122 (NKSE), 209-216 (GRPNAGKS), 256-260 (DTAGM), and 321-324 (NKWD). Residues 379 to 463 (KRISTAKLNR…PIRIHFRSAE (85 aa)) form the KH-like domain.

The protein belongs to the TRAFAC class TrmE-Era-EngA-EngB-Septin-like GTPase superfamily. EngA (Der) GTPase family. Associates with the 50S ribosomal subunit.

In terms of biological role, GTPase that plays an essential role in the late steps of ribosome biogenesis. This is GTPase Der from Rhizobium leguminosarum bv. trifolii (strain WSM2304).